The following is a 255-amino-acid chain: 5'-nucleotidase SurE (255 aa).

The a divalent metal cation site is built by Asp-8, Asp-9, Ser-40, and Asn-93.

Belongs to the SurE nucleotidase family. A divalent metal cation serves as cofactor.

The protein resides in the cytoplasm. It carries out the reaction a ribonucleoside 5'-phosphate + H2O = a ribonucleoside + phosphate. Nucleotidase that shows phosphatase activity on nucleoside 5'-monophosphates. The chain is 5'-nucleotidase SurE from Bradyrhizobium diazoefficiens (strain JCM 10833 / BCRC 13528 / IAM 13628 / NBRC 14792 / USDA 110).